The following is a 78-amino-acid chain: Acyl carrier protein (78 aa).

Residues 2 to 77 enclose the Carrier domain; the sequence is STIEERVKKI…AAIDYVTSHQ (76 aa). Residue Ser-37 is modified to O-(pantetheine 4'-phosphoryl)serine.

This sequence belongs to the acyl carrier protein (ACP) family. 4'-phosphopantetheine is transferred from CoA to a specific serine of apo-ACP by AcpS. This modification is essential for activity because fatty acids are bound in thioester linkage to the sulfhydryl of the prosthetic group.

Its subcellular location is the cytoplasm. It functions in the pathway lipid metabolism; fatty acid biosynthesis. Functionally, carrier of the growing fatty acid chain in fatty acid biosynthesis. The sequence is that of Acyl carrier protein from Pseudomonas fluorescens (strain SBW25).